The chain runs to 162 residues: 3-dehydroquinate dehydratase (162 aa).

The active-site Proton acceptor is the Y22. Substrate contacts are provided by N73, H79, and D86. H99 serves as the catalytic Proton donor. Residues 100–101 (LS) and R110 each bind substrate.

This sequence belongs to the type-II 3-dehydroquinase family. In terms of assembly, homododecamer.

It catalyses the reaction 3-dehydroquinate = 3-dehydroshikimate + H2O. Its pathway is metabolic intermediate biosynthesis; chorismate biosynthesis; chorismate from D-erythrose 4-phosphate and phosphoenolpyruvate: step 3/7. Its function is as follows. Catalyzes a trans-dehydration via an enolate intermediate. This is 3-dehydroquinate dehydratase from Sulfurovum sp. (strain NBC37-1).